Consider the following 123-residue polypeptide: Guanine nucleotide exchange factor MSS4 (123 aa).

Met1 carries the post-translational modification N-acetylmethionine. Residues 9–123 enclose the MSS4 domain; it reads ELVSAEGRNR…YVALERVSHE (115 aa). 4 residues coordinate Zn(2+): Cys23, Cys26, Cys94, and Cys97.

This sequence belongs to the DSS4/MSS4 family. As to quaternary structure, interacts with RAB8A. In terms of tissue distribution, ubiquitous.

Its function is as follows. Guanine-nucleotide-releasing protein that acts on members of the SEC4/YPT1/RAB subfamily. Stimulates GDP release from both YPT1, RAB3A and RAB10, but is less active on these proteins than on the SEC4 protein. Might play a general role in vesicular transport. The protein is Guanine nucleotide exchange factor MSS4 (Rabif) of Rattus norvegicus (Rat).